The following is a 189-amino-acid chain: GTP cyclohydrolase 1 (189 aa).

Residues Cys-78, His-81, and Cys-150 each coordinate Zn(2+).

This sequence belongs to the GTP cyclohydrolase I family. As to quaternary structure, homomer.

The enzyme catalyses GTP + H2O = 7,8-dihydroneopterin 3'-triphosphate + formate + H(+). The protein operates within cofactor biosynthesis; 7,8-dihydroneopterin triphosphate biosynthesis; 7,8-dihydroneopterin triphosphate from GTP: step 1/1. In Bacillus anthracis (strain A0248), this protein is GTP cyclohydrolase 1.